The sequence spans 100 residues: Putative pterin-4-alpha-carbinolamine dehydratase (100 aa).

Belongs to the pterin-4-alpha-carbinolamine dehydratase family.

It carries out the reaction (4aS,6R)-4a-hydroxy-L-erythro-5,6,7,8-tetrahydrobiopterin = (6R)-L-erythro-6,7-dihydrobiopterin + H2O. This is Putative pterin-4-alpha-carbinolamine dehydratase from Afipia carboxidovorans (strain ATCC 49405 / DSM 1227 / KCTC 32145 / OM5) (Oligotropha carboxidovorans).